The sequence spans 343 residues: Protein SOSEKI 4 (343 aa).

Residues 18–109 (RIVPVVYYLS…YVLKGSQILD (92 aa)) are DIX-like oligomerization domain. Residues 148–194 (RKLSMDASTQTDDRRRRKSPVDEVNEVTELSREEITSPPQSDSSPET) are disordered. Positions 184 to 194 (SPPQSDSSPET) are enriched in polar residues. Positions 233–234 (CG) match the Association to cell membranes motif.

Belongs to the SOSEKI family. Homodimer. Forms long polymer filaments with other SOKs proteins polymers (e.g. SOK1, SOK2, SOK3 and SOK4) crucial for polar localization and biological activity. Binds to ANGUSTIFOLIA (AN). As to expression, expressed during embryogenesis and in roots.

The protein resides in the cell membrane. In terms of biological role, SOSEKI proteins (SOK1-5) locally interpret global polarity cues and can influence cell division orientation to coordinate cell polarization relative to body axes, probably by guiding ANGUSTIFOLIA (AN) polarized localization. Positive regulator of auxin (indole-3-acetic acid, IAA) biosynthesis and signaling pathway leading to the modulation of seedling growth, plant and inflorescence development. Negative regulator of stress responses (e.g. salinity and osmotic stress). This Arabidopsis thaliana (Mouse-ear cress) protein is Protein SOSEKI 4.